The chain runs to 72 residues: Brevinin-2SN4 (72 aa).

The signal sequence occupies residues 1–22 (MFTMKKPMLLLFFLGMISMSLC). The propeptide at 23-40 (QDERGADEDDGGEMTEEE) is removed in mature form. An intrachain disulfide couples cysteine 66 to cysteine 72.

Belongs to the frog skin active peptide (FSAP) family. Brevinin subfamily. In terms of tissue distribution, expressed by the skin glands.

The protein resides in the secreted. Functionally, antimicrobial peptide. Active against a variety of Gram-negative and Gram-positive bacterial strains. Not active against fungi. Shows very weak hemolytic activity against human erythrocytes. This is Brevinin-2SN4 from Sylvirana spinulosa (Fine-spined frog).